A 314-amino-acid polypeptide reads, in one-letter code: Oxidoreductase NAD-binding domain-containing protein 1 (314 aa).

Positions 1-18 (MALVAGSAAYQVLRGVTG) are cleaved as a signal peptide. In terms of domain architecture, FAD-binding FR-type spans 63-166 (EIISPAKVCE…VGGEFCFDPQ (104 aa)). Residue 180-185 (GVGINP) participates in NAD(+) binding.

This chain is Oxidoreductase NAD-binding domain-containing protein 1 (oxnad1), found in Xenopus tropicalis (Western clawed frog).